We begin with the raw amino-acid sequence, 318 residues long: MTLSLIIKWGGQEFPLSALSEEDTVLDLKHSLKSLTGVLPERMKLLGLKYKGKPAENDVKLGVLKLKPNTKIMMMGTREESLEEMMAPPPENDEVVNDFDIEEEVVEVENREENLAKISRRVKDYKIEILNPPREGKKLLVLDVDYTLFDHRSCAETGQELMRPYLHEFLTSAYEDYDIVIWSATSMKWIEAKMKELGVSTNSNYKITFMLDSAAMITVHTPRRGLVDVKPLGVIWGKYGEFYNKNNTIMFDDIGRNFLMNPQNGLKIRPFMKAHLNRDKDKELLKLSQYLKEIAQLDDLSELNHKHWERYLVKKQGQ.

A Ubiquitin-like domain is found at 3–81; it reads LSLIIKWGGQ…IMMMGTREES (79 aa). An FCP1 homology domain is found at 133–294; the sequence is PREGKKLLVL…LKLSQYLKEI (162 aa). Mg(2+)-binding residues include D143, D145, and D253.

Mg(2+) serves as cofactor.

The protein localises to the nucleus. It catalyses the reaction O-phospho-L-seryl-[protein] + H2O = L-seryl-[protein] + phosphate. It carries out the reaction O-phospho-L-threonyl-[protein] + H2O = L-threonyl-[protein] + phosphate. Dephosphorylates 26S nuclear proteasomes, thereby decreasing their proteolytic activity. Recruited to the 19S regulatory particle of the 26S proteasome where it dephosphorylates 19S component psmc2 which impairs psmc2 ATPase activity and disrupts 26S proteasome assembly. Has also been reported to stimulate the proteolytic activity of the 26S proteasome. In Xenopus tropicalis (Western clawed frog), this protein is Ubiquitin-like domain-containing CTD phosphatase 1 (ublcp1).